The sequence spans 197 residues: Probable molybdenum cofactor guanylyltransferase (197 aa).

Residues 6-8 (LAG), Lys18, Asp65, and Asp97 contribute to the GTP site. Residue Asp97 participates in Mg(2+) binding.

It belongs to the MobA family. Mg(2+) is required as a cofactor.

It is found in the cytoplasm. The catalysed reaction is Mo-molybdopterin + GTP + H(+) = Mo-molybdopterin guanine dinucleotide + diphosphate. In terms of biological role, transfers a GMP moiety from GTP to Mo-molybdopterin (Mo-MPT) cofactor (Moco or molybdenum cofactor) to form Mo-molybdopterin guanine dinucleotide (Mo-MGD) cofactor. The sequence is that of Probable molybdenum cofactor guanylyltransferase from Staphylococcus carnosus (strain TM300).